The following is a 141-amino-acid chain: Large ribosomal subunit protein uL11 (141 aa).

Belongs to the universal ribosomal protein uL11 family. In terms of assembly, part of the ribosomal stalk of the 50S ribosomal subunit. Interacts with L10 and the large rRNA to form the base of the stalk. L10 forms an elongated spine to which L12 dimers bind in a sequential fashion forming a multimeric L10(L12)X complex. In terms of processing, one or more lysine residues are methylated.

Forms part of the ribosomal stalk which helps the ribosome interact with GTP-bound translation factors. The protein is Large ribosomal subunit protein uL11 of Herpetosiphon aurantiacus (strain ATCC 23779 / DSM 785 / 114-95).